A 106-amino-acid chain; its full sequence is MTKQIIKGIIIERSSPLKIDELSQAVHLRREIIIEMVEHRLIEPEGSSPTSWKFDNVCLKRAKIAASFYRDLEINMPGIAIALDLLDKIEHLEQRLRTLERFENQE.

The protein belongs to the CbpM family.

In terms of biological role, interacts with CbpA and inhibits both the DnaJ-like co-chaperone activity and the DNA binding activity of CbpA. Together with CbpA, modulates the activity of the DnaK chaperone system. Does not inhibit the co-chaperone activity of DnaJ. The sequence is that of Chaperone modulatory protein CbpM from Coxiella burnetii (strain CbuK_Q154) (Coxiella burnetii (strain Q154)).